The following is a 260-amino-acid chain: Exosome complex component Rrp4 (260 aa).

An S1 motif domain is found at 59-128; sequence NDVVIGIVIV…SSMKVELALR (70 aa). A KH domain is found at 136 to 194; the sequence is KTGQIIKVESVKVPRVIGHGGSMISMLKKETNCSIFVGQNGRIWIDGKDEDIELLSKAL.

It belongs to the RRP4 family. Component of the archaeal exosome complex. Forms a trimer of Rrp4 and/or Csl4 subunits. The trimer associates with a hexameric ring-like arrangement composed of 3 Rrp41-Rrp42 heterodimers.

The protein resides in the cytoplasm. Functionally, non-catalytic component of the exosome, which is a complex involved in RNA degradation. Increases the RNA binding and the efficiency of RNA degradation. Confers strong poly(A) specificity to the exosome. The chain is Exosome complex component Rrp4 from Methanosarcina acetivorans (strain ATCC 35395 / DSM 2834 / JCM 12185 / C2A).